A 362-amino-acid polypeptide reads, in one-letter code: 3-isopropylmalate dehydrogenase (362 aa).

78 to 91 (GYKWDSLPPHQRPE) is a binding site for NAD(+). Arg-98, Arg-108, Arg-136, and Asp-226 together coordinate substrate. Mg(2+)-binding residues include Asp-226, Asp-250, and Asp-254. 284–296 (GSAPDIAGQDKAN) provides a ligand contact to NAD(+).

The protein belongs to the isocitrate and isopropylmalate dehydrogenases family. LeuB type 1 subfamily. In terms of assembly, homodimer. Mg(2+) serves as cofactor. Mn(2+) is required as a cofactor.

The protein localises to the cytoplasm. The enzyme catalyses (2R,3S)-3-isopropylmalate + NAD(+) = 4-methyl-2-oxopentanoate + CO2 + NADH. The protein operates within amino-acid biosynthesis; L-leucine biosynthesis; L-leucine from 3-methyl-2-oxobutanoate: step 3/4. Catalyzes the oxidation of 3-carboxy-2-hydroxy-4-methylpentanoate (3-isopropylmalate) to 3-carboxy-4-methyl-2-oxopentanoate. The product decarboxylates to 4-methyl-2 oxopentanoate. The protein is 3-isopropylmalate dehydrogenase of Nostoc sp. (strain PCC 7120 / SAG 25.82 / UTEX 2576).